Reading from the N-terminus, the 412-residue chain is LL-diaminopimelate aminotransferase (412 aa).

Positions 15 and 42 each coordinate substrate. Pyridoxal 5'-phosphate-binding positions include Y72, 108–109, Y132, N187, Y218, and 246–248; these read SK and SFS. The substrate site is built by K109, Y132, and N187. Position 249 is an N6-(pyridoxal phosphate)lysine (K249). Pyridoxal 5'-phosphate is bound by residues R257 and N292. Substrate is bound by residues N292 and R388.

It belongs to the class-I pyridoxal-phosphate-dependent aminotransferase family. LL-diaminopimelate aminotransferase subfamily. In terms of assembly, homodimer. Requires pyridoxal 5'-phosphate as cofactor.

The enzyme catalyses (2S,6S)-2,6-diaminopimelate + 2-oxoglutarate = (S)-2,3,4,5-tetrahydrodipicolinate + L-glutamate + H2O + H(+). Its pathway is amino-acid biosynthesis; L-lysine biosynthesis via DAP pathway; LL-2,6-diaminopimelate from (S)-tetrahydrodipicolinate (aminotransferase route): step 1/1. Involved in the synthesis of meso-diaminopimelate (m-DAP or DL-DAP), required for both lysine and peptidoglycan biosynthesis. Catalyzes the direct conversion of tetrahydrodipicolinate to LL-diaminopimelate. This Synechocystis sp. (strain ATCC 27184 / PCC 6803 / Kazusa) protein is LL-diaminopimelate aminotransferase.